The primary structure comprises 316 residues: Bifunctional riboflavin kinase/FMN adenylyltransferase (316 aa).

The protein belongs to the RibF family.

The catalysed reaction is riboflavin + ATP = FMN + ADP + H(+). It catalyses the reaction FMN + ATP + H(+) = FAD + diphosphate. It functions in the pathway cofactor biosynthesis; FAD biosynthesis; FAD from FMN: step 1/1. It participates in cofactor biosynthesis; FMN biosynthesis; FMN from riboflavin (ATP route): step 1/1. Functionally, catalyzes the phosphorylation of riboflavin to FMN followed by the adenylation of FMN to FAD. The protein is Bifunctional riboflavin kinase/FMN adenylyltransferase (ribC) of Bacillus subtilis (strain 168).